Reading from the N-terminus, the 70-residue chain is MKETNLSIKGVVKEIIKGDKFKVLLENNLLIEAHVSGKIRMHKIRILPGDSVEVEFSPYDLTKGRIIYRH.

An S1-like domain is found at 1–70 (MKETNLSIKG…LTKGRIIYRH (70 aa)).

The protein belongs to the IF-1 family. Component of the 30S ribosomal translation pre-initiation complex which assembles on the 30S ribosome in the order IF-2 and IF-3, IF-1 and N-formylmethionyl-tRNA(fMet); mRNA recruitment can occur at any time during PIC assembly.

The protein localises to the cytoplasm. Functionally, one of the essential components for the initiation of protein synthesis. Stabilizes the binding of IF-2 and IF-3 on the 30S subunit to which N-formylmethionyl-tRNA(fMet) subsequently binds. Helps modulate mRNA selection, yielding the 30S pre-initiation complex (PIC). Upon addition of the 50S ribosomal subunit IF-1, IF-2 and IF-3 are released leaving the mature 70S translation initiation complex. The polypeptide is Translation initiation factor IF-1 (Mycoplasmoides gallisepticum (strain R(low / passage 15 / clone 2)) (Mycoplasma gallisepticum)).